We begin with the raw amino-acid sequence, 461 residues long: uncharacterized protein (461 aa).

Positions 86–127 are disordered; it reads KMKPNKDDDEEEDEDDEDDEDDEEEDNEEEDNEEENEITIAP. Positions 92-122 are enriched in acidic residues; the sequence is DDDEEEDEDDEDDEDDEEEDNEEEDNEEENE. Coiled-coil stretches lie at residues 95–123 and 405–459; these read EEEDEDDEDDEDDEEEDNEEEDNEEENEI and NKYI…KLKK.

It belongs to the mimivirus L5 family.

This is an uncharacterized protein from Acanthamoeba polyphaga mimivirus (APMV).